We begin with the raw amino-acid sequence, 487 residues long: 6-phosphogluconate dehydrogenase, decarboxylating 1, chloroplastic (487 aa).

Met1 carries the post-translational modification N-acetylmethionine. NADP(+)-binding positions include 13-18 (GLAVMG), 36-38 (NRT), 80-82 (VKA), and Asn108. Residues Asn108 and 134 to 136 (SGG) contribute to the substrate site. The active-site Proton acceptor is the Lys188. 191–192 (HN) is a substrate binding site. Residue Glu195 is the Proton donor of the active site. 5 residues coordinate substrate: Tyr196, Lys266, Arg293, Arg458, and His464.

This sequence belongs to the 6-phosphogluconate dehydrogenase family. In terms of assembly, forms homodimer. Forms heterodimers with PGD2 or PGD3.

It is found in the plastid. The protein localises to the chloroplast. It localises to the cytoplasm. The protein resides in the cytosol. The enzyme catalyses 6-phospho-D-gluconate + NADP(+) = D-ribulose 5-phosphate + CO2 + NADPH. The protein operates within carbohydrate degradation; pentose phosphate pathway; D-ribulose 5-phosphate from D-glucose 6-phosphate (oxidative stage): step 3/3. Catalyzes the oxidative decarboxylation of 6-phosphogluconate to ribulose 5-phosphate and CO(2), with concomitant reduction of NADP to NADPH. This chain is 6-phosphogluconate dehydrogenase, decarboxylating 1, chloroplastic, found in Arabidopsis thaliana (Mouse-ear cress).